Consider the following 148-residue polypeptide: uncharacterized protein (148 aa).

The segment covering 1 to 17 (MCPPVRQRPAQAPPAKR) has biased composition (low complexity). 2 disordered regions span residues 1–86 (MCPP…VQSP) and 122–148 (RAHR…TSPC). A compositionally biased stretch (basic residues) spans 38–57 (RPPKMQRRPRPPVAKRRRFP). Over residues 137-148 (QRPSPDSQTSPC) the composition is skewed to polar residues.

This sequence belongs to the Epstein-Barr virus BLLF2 family.

This is an uncharacterized protein from Epstein-Barr virus (strain AG876) (HHV-4).